Consider the following 130-residue polypeptide: Iron-sulfur cluster insertion protein ErpA 2 (130 aa).

3 residues coordinate iron-sulfur cluster: Cys58, Cys122, and Cys124.

It belongs to the HesB/IscA family. In terms of assembly, homodimer. The cofactor is iron-sulfur cluster.

Functionally, required for insertion of 4Fe-4S clusters for at least IspG. In Methylococcus capsulatus (strain ATCC 33009 / NCIMB 11132 / Bath), this protein is Iron-sulfur cluster insertion protein ErpA 2.